The primary structure comprises 396 residues: MQTFVKGKRVGYWLSEKKIKKLNFQTFVDLCRKQGIEMIQLDLSQPIESQGPFDVIIHKLTDHIVDADQNVTESLLLVQGVQDYIDAHPETVILDPLPAIRTLLDRCKSYKLIHKLEHSMEDDRICSPPFMVLKTECGFETLEQLHKHGITFPFICKPQVAHGTNSHEMAIIFSEEDLKDIKPPCVLQSFINHNAVLYKVFVVGEAYSVVQRPSIRNFPSGPTDRRAISFNSHHVSKPESSSHLTCRDNMVGQSWKPSNEVIQKISRKLHQALGISLFGIDIIINNQTGQHAVIDINAFPGYEGVPEFFDDLLSHISSVLQGQVCNGVACGHLRVNGTAQSQTVHCGMLGNDSSWLMDSEGIKKGPHQGLSCCGGCMTPNFHQHTRSSLTAETSSQ.

Residue lysine 18 participates in 1D-myo-inositol 1,3,4-trisphosphate binding. Arginine 106 and lysine 157 together coordinate ATP. Residues 117-325 (EHSMEDDRIC…ISSVLQGQVC (209 aa)) form the ATP-grasp domain. Positions 167 and 199 each coordinate 1D-myo-inositol 1,3,4-trisphosphate. Residues 188–199 (QSFINHNAVLYK), serine 214, serine 232, and serine 236 contribute to the ATP site. Residues aspartate 281, aspartate 295, and asparagine 297 each coordinate Mg(2+). Asparagine 297 is a 1D-myo-inositol 1,3,4-trisphosphate binding site.

Belongs to the ITPK1 family. Monomer. The cofactor is Mg(2+).

The catalysed reaction is 1D-myo-inositol 3,4,5,6-tetrakisphosphate + ATP = 1D-myo-inositol 1,3,4,5,6-pentakisphosphate + ADP + H(+). It carries out the reaction 1D-myo-inositol 1,3,4-trisphosphate + ATP = 1D-myo-inositol 1,3,4,5-tetrakisphosphate + ADP + H(+). The enzyme catalyses 1D-myo-inositol 1,3,4-trisphosphate + ATP = 1D-myo-inositol 1,3,4,6-tetrakisphosphate + ADP + H(+). It catalyses the reaction 1D-myo-inositol 3,4,6-trisphosphate + ATP = 1D-myo-inositol 1,3,4,6-tetrakisphosphate + ADP + H(+). The catalysed reaction is 1D-myo-inositol 1,3,4-trisphosphate + 1D-myo-inositol 1,3,4,5,6-pentakisphosphate = 1D-myo-inositol 3,4,5,6-tetrakisphosphate + 1D-myo-inositol 1,3,4,6-tetrakisphosphate. It carries out the reaction 1D-myo-inositol 1,3,4-trisphosphate + 1D-myo-inositol 1,3,4,5,6-pentakisphosphate = 1D-myo-inositol 3,4,5,6-tetrakisphosphate + 1D-myo-inositol 1,3,4,5-tetrakisphosphate. Functionally, kinase that can phosphorylate various inositol polyphosphate such as Ins(3,4,5,6)P4 or Ins(1,3,4)P3. Phosphorylates Ins(3,4,5,6)P4 at position 1 to form Ins(1,3,4,5,6)P5. This reaction is thought to have regulatory importance, since Ins(3,4,5,6)P4 is an inhibitor of plasma membrane Ca(2+)-activated Cl(-) channels, while Ins(1,3,4,5,6)P5 is not. Also phosphorylates Ins(1,3,4)P3 on O-5 and O-6 to form Ins(1,3,4,6)P4, an essential molecule in the hexakisphosphate (InsP6) pathway. Also acts as an inositol polyphosphate phosphatase that dephosphorylates Ins(1,3,4,5)P4 and Ins(1,3,4,6)P4 to Ins(1,3,4)P3, and Ins(1,3,4,5,6)P5 to Ins(3,4,5,6)P4. May also act as an isomerase that interconverts the inositol tetrakisphosphate isomers Ins(1,3,4,5)P4 and Ins(1,3,4,6)P4 in the presence of ADP and magnesium. Probably acts as the rate-limiting enzyme of the InsP6 pathway. Modifies TNF-alpha-induced apoptosis by interfering with the activation of TNFRSF1A-associated death domain. Plays an important role in MLKL-mediated necroptosis. Produces highly phosphorylated inositol phosphates such as inositolhexakisphosphate (InsP6) which bind to MLKL mediating the release of an N-terminal auto-inhibitory region leading to its activation. Essential for activated phospho-MLKL to oligomerize and localize to the cell membrane during necroptosis. This is Inositol-tetrakisphosphate 1-kinase (itpk1) from Danio rerio (Zebrafish).